Here is a 149-residue protein sequence, read N- to C-terminus: MHCPFCDTEETKVIDSRLVSDGYQVRRRRECGHCHERFTTFEMAELIIPKIIKTDGTREPFNEDKLRSGIQHALEKRPVSADDVEKAINHIILQLRATGEREVPSKLVGKLAMNELKKLDKVAYIRFASVYLSFDDIDQFTIEIEKLKD.

Residues 3–34 (CPFCDTEETKVIDSRLVSDGYQVRRRRECGHC) fold into a zinc finger. The ATP-cone domain maps to 49 to 139 (PKIIKTDGTR…VYLSFDDIDQ (91 aa)).

It belongs to the NrdR family. Zn(2+) serves as cofactor.

Negatively regulates transcription of bacterial ribonucleotide reductase nrd genes and operons by binding to NrdR-boxes. The polypeptide is Transcriptional repressor NrdR (Haemophilus influenzae (strain 86-028NP)).